A 253-amino-acid polypeptide reads, in one-letter code: 5'-nucleotidase SurE (253 aa).

The a divalent metal cation site is built by D8, D9, S40, and N93.

The protein belongs to the SurE nucleotidase family. A divalent metal cation is required as a cofactor.

The protein localises to the cytoplasm. It catalyses the reaction a ribonucleoside 5'-phosphate + H2O = a ribonucleoside + phosphate. Nucleotidase that shows phosphatase activity on nucleoside 5'-monophosphates. This Methylobacterium nodulans (strain LMG 21967 / CNCM I-2342 / ORS 2060) protein is 5'-nucleotidase SurE.